Reading from the N-terminus, the 586-residue chain is uncharacterized protein (586 aa).

The tract at residues 1–115 is disordered; sequence MRVLVAETGR…NTEKLAGRDD (115 aa). Positions 8–20 are enriched in basic and acidic residues; the sequence is TGREDNVSVHSRE. Polar residues predominate over residues 21–31; it reads VSVNGSDSGTG. Over residues 35–44 the composition is skewed to basic and acidic residues; sequence YKLETDDEHP. Over residues 76–107 the composition is skewed to polar residues; the sequence is TGMNTEYNDDNSSLVNTPRDSTTYAETNSPNT. WD repeat units lie at residues 184-223, 253-291, 293-333, 335-374, 387-430, and 432-474; these read QFKESVWASEISKSGKYLATAGKDAIIRVWKVIETPERRE, GHNAEVLSISWSKNDFLLTSSADRTVRLWHPKSTKSLAV, RHNE…ILHW, ELEYVVSTICFYPDGESIVVGMFYGLCAIYETKNLQYVSS, CRVT…LVLK, and SDAH…LINA.

It is found in the cytoplasm. Its subcellular location is the nucleus. This is an uncharacterized protein from Schizosaccharomyces pombe (strain 972 / ATCC 24843) (Fission yeast).